Here is a 28-residue protein sequence, read N- to C-terminus: Short cationic peptide-1a (28 aa).

Glu28 is subject to Glutamic acid 1-amide.

As to expression, expressed by the venom gland.

The protein resides in the secreted. This is Short cationic peptide-1a from Cupiennius salei (American wandering spider).